The following is a 1032-amino-acid chain: Kinesin heavy chain isoform 5A (1032 aa).

A2 is subject to N-acetylalanine. One can recognise a Kinesin motor domain in the interval 9–327 (SIKVLCRFRP…LMFGQRAKTI (319 aa)). 86–93 (GQTSSGKT) contacts ATP. Residues 174 to 315 (VSSPEEILDV…PSSYNDAETK (142 aa)) form a microtubule-binding region. The tract at residues 271–361 (EGTKSYVPYR…KTKAQKETIA (91 aa)) is necessary for interaction with ZFYVE27. The stretch at 331-906 (ASVNLELTAE…VDRIKEAVRY (576 aa)) forms a coiled coil. An interaction with BICD2 region spans residues 353-1032 (TKAQKETIAK…FPLHQETAAS (680 aa)). Residue T397 is modified to Phosphothreonine. Disordered stretches follow at residues 906–939 (YKSSGKRGHSAQIAKPVRPGHYPASSPTNPYGTR) and 978–1010 (SGATSSGGPLASYQKANMDNGNATDINDNRSDL). Residues 907 to 1032 (KSSGKRGHSA…FPLHQETAAS (126 aa)) form a globular region. Over residues 978–989 (SGATSSGGPLAS) the composition is skewed to low complexity. Over residues 991–1003 (QKANMDNGNATDI) the composition is skewed to polar residues.

It belongs to the TRAFAC class myosin-kinesin ATPase superfamily. Kinesin family. Kinesin subfamily. Oligomer composed of two heavy chains and two light chains. Interacts with GRIP1. Interacts with FMR1 (via C-terminus); this interaction is increased in a mGluR-dependent manner. Interacts with ZFYVE27. Interacts with VAPA, VAPB, SURF4, RAB11A (GDP-bound form), RAB11B (GDP-bound form) and RTN3 in a ZFYVE27-dependent manner. Interacts with BORCS5. Interacts with BICD2. Interacts with DTNB. Distributed throughout the CNS but is highly enriched in subsets of neurons.

The protein localises to the cytoplasm. The protein resides in the perinuclear region. Its subcellular location is the cytoskeleton. It localises to the perikaryon. The catalysed reaction is ATP + H2O + a kinesin associated with a microtubule at position (n) = ADP + phosphate a kinesin associated with a microtubule at position (n+1, toward the plus end).. Its function is as follows. Microtubule-dependent motor required for slow axonal transport of neurofilament proteins (NFH, NFM and NFL). Can induce formation of neurite-like membrane protrusions in non-neuronal cells in a ZFYVE27-dependent manner. The ZFYVE27-KIF5A complex contributes to the vesicular transport of VAPA, VAPB, SURF4, RAB11A, RAB11B and RTN3 proteins in neurons. Required for anterograde axonal transportation of MAPK8IP3/JIP3 which is essential for MAPK8IP3/JIP3 function in axon elongation. The polypeptide is Kinesin heavy chain isoform 5A (Homo sapiens (Human)).